The sequence spans 763 residues: Phospholipid phosphatase-related protein type 4 (763 aa).

The segment at 33 to 54 is disordered; sequence VHTSPGGGRRPGQAAGMSAKER. Residue Ser-36 is modified to Phosphoserine. A run of 3 helical transmembrane segments spans residues 67-87, 119-139, and 178-198; these read LPCF…SLYF, AIPF…TIMV, and FVGV…IIQL. Residues Asn-214 and Asn-219 are each glycosylated (N-linked (GlcNAc...) asparagine). The helical transmembrane segment at 247 to 267 threads the bilayer; sequence SFPSQHATLAAFAAVYVSMYF. Asn-268 carries N-linked (GlcNAc...) asparagine glycosylation. A run of 2 helical transmembrane segments spans residues 276–296 and 308–328; these read KLLK…CGLT and VYCG…YAVG. Residue Ser-346 is modified to Phosphoserine. Asn-362 carries an N-linked (GlcNAc...) asparagine glycan. Ser-385 carries the post-translational modification Phosphoserine. N-linked (GlcNAc...) asparagine glycosylation occurs at Asn-432. Ser-438 is modified (phosphoserine). N-linked (GlcNAc...) asparagine glycosylation is present at Asn-455. The interval 458–529 is disordered; it reads RKLSLQVIEP…PRVSIQSRPG (72 aa). Phosphoserine occurs at positions 461 and 472. 3 N-linked (GlcNAc...) asparagine glycosylation sites follow: Asn-513, Asn-543, and Asn-568. Residue Ser-606 is modified to Phosphoserine. Positions 669–694 are enriched in basic and acidic residues; sequence DSESCESLKDSFGSGDRKRSNIDSNE. Disordered regions lie at residues 669–698 and 739–763; these read DSES…HHHH and ERSN…AYKD. Polar residues predominate over residues 740-749; sequence RSNSPENTRN.

Belongs to the PA-phosphatase related phosphoesterase family. O-glycosylated. Probably at Ser-346. In terms of tissue distribution, expressed by glutamatergic neurons (at protein level).

It localises to the postsynaptic density membrane. In terms of biological role, postsynaptic density membrane protein that indirectly regulates glutamatergic synaptic transmission through lysophosphatidic acid (LPA)-mediated signaling pathways. Binds lysophosphatidic acid (LPA) and mediates its internalization into cells. Could act as receptor or a transporter of this lipid at the post-synaptic membrane. Modulates lysophosphatidic acid (LPA) activity in neuron axonal outgrowth during development by attenuating phospholipid-induced axon collapse. This is Phospholipid phosphatase-related protein type 4 from Homo sapiens (Human).